The primary structure comprises 96 residues: Integration host factor subunit beta (96 aa).

A disordered region spans residues 59–78 (RVGRNPKTGETVSLPGKYVP).

It belongs to the bacterial histone-like protein family. Heterodimer of an alpha and a beta chain.

Functionally, this protein is one of the two subunits of integration host factor, a specific DNA-binding protein that functions in genetic recombination as well as in transcriptional and translational control. The sequence is that of Integration host factor subunit beta from Thioalkalivibrio sulfidiphilus (strain HL-EbGR7).